We begin with the raw amino-acid sequence, 432 residues long: Tol-Pal system protein TolB (432 aa).

A signal peptide spans 1-21 (MKHVRIFATLLALLVISVTPA).

It belongs to the TolB family. As to quaternary structure, the Tol-Pal system is composed of five core proteins: the inner membrane proteins TolA, TolQ and TolR, the periplasmic protein TolB and the outer membrane protein Pal. They form a network linking the inner and outer membranes and the peptidoglycan layer.

The protein resides in the periplasm. In terms of biological role, part of the Tol-Pal system, which plays a role in outer membrane invagination during cell division and is important for maintaining outer membrane integrity. The protein is Tol-Pal system protein TolB of Geobacter sulfurreducens (strain ATCC 51573 / DSM 12127 / PCA).